The chain runs to 319 residues: Acetaldehyde dehydrogenase 1 (319 aa).

Cys129 acts as the Acyl-thioester intermediate in catalysis. Residues 160–168 and Asn287 each bind NAD(+); that span reads SAGPGTRAN.

Belongs to the acetaldehyde dehydrogenase family.

It carries out the reaction acetaldehyde + NAD(+) + CoA = acetyl-CoA + NADH + H(+). The sequence is that of Acetaldehyde dehydrogenase 1 from Burkholderia lata (strain ATCC 17760 / DSM 23089 / LMG 22485 / NCIMB 9086 / R18194 / 383).